The chain runs to 508 residues: Lysine--tRNA ligase (508 aa).

Residues E418 and E425 each contribute to the Mg(2+) site.

It belongs to the class-II aminoacyl-tRNA synthetase family. As to quaternary structure, homodimer. Mg(2+) serves as cofactor.

The protein localises to the cytoplasm. It catalyses the reaction tRNA(Lys) + L-lysine + ATP = L-lysyl-tRNA(Lys) + AMP + diphosphate. The sequence is that of Lysine--tRNA ligase from Burkholderia pseudomallei (strain K96243).